The sequence spans 221 residues: Urease accessory protein UreF (221 aa).

It belongs to the UreF family. UreD, UreF and UreG form a complex that acts as a GTP-hydrolysis-dependent molecular chaperone, activating the urease apoprotein by helping to assemble the nickel containing metallocenter of UreC. The UreE protein probably delivers the nickel.

Its subcellular location is the cytoplasm. Its function is as follows. Required for maturation of urease via the functional incorporation of the urease nickel metallocenter. This chain is Urease accessory protein UreF, found in Aliivibrio fischeri (strain MJ11) (Vibrio fischeri).